Consider the following 109-residue polypeptide: Transmembrane protein 233 (109 aa).

Positions 1–30 (MSQYAPSPDFKRALDSSPEANTEDDKTEED) are disordered. The Cytoplasmic portion of the chain corresponds to 1–41 (MSQYAPSPDFKRALDSSPEANTEDDKTEEDVPMPKNYLWLT). The segment covering 21–30 (NTEDDKTEED) has biased composition (acidic residues). An intramembrane region (helical) is located at residues 42-62 (IVSCFCPAYPINIVALVFSIM). The Cytoplasmic segment spans residues 63–84 (SLNSYNDGDYEGARRLGRNAKW). A helical membrane pass occupies residues 85–105 (VAIASIIIGLLIIGISCAVHF). The Extracellular segment spans residues 106-109 (TRNA).

Belongs to the CD225/Dispanin family. In terms of assembly, interacts with the giant stinging tree toxin ExTxA (AC P0DQP3). Interacts with Nav1.7/SCN9A. Interacts with Nav1.1/SCN1A, Nav1.2/SCN2A, Nav1.3/SCN3A, Nav1.4/SCN4A, Nav1.5/SCN5A, and Nav1.6/SCN8A.

The protein resides in the cell membrane. Probable accessory protein of voltage-gated sodium channels. The polypeptide is Transmembrane protein 233 (Homo sapiens (Human)).